A 237-amino-acid polypeptide reads, in one-letter code: Ribosomal RNA small subunit methyltransferase G (237 aa).

S-adenosyl-L-methionine contacts are provided by residues Gly-76, Phe-81, 128–129 (VE), and Arg-147.

The protein belongs to the methyltransferase superfamily. RNA methyltransferase RsmG family.

The protein localises to the cytoplasm. In terms of biological role, specifically methylates the N7 position of a guanine in 16S rRNA. The sequence is that of Ribosomal RNA small subunit methyltransferase G from Prochlorococcus marinus (strain MIT 9215).